An 854-amino-acid chain; its full sequence is Glucans biosynthesis glucosyltransferase H (854 aa).

7 helical membrane passes run 155–175 (ILLVLTLFQTAIATWYMKTIL), 209–229 (ILVLFAVLFCWVSAGFWTALM), 528–548 (VFLTGVMSYLSAPLWFMFLML), 583–603 (IALFSTTLVLLFLPKLLSVIL), 619–639 (FISLLLEMLFSVLLAPVRMLF), 671–691 (FVRHGSQLILGLVWAIGMAWL), and 695–715 (FLWWLAPIVFSLILSPFVSVY).

The protein belongs to the glycosyltransferase 2 family. OpgH subfamily.

It localises to the cell inner membrane. It functions in the pathway glycan metabolism; osmoregulated periplasmic glucan (OPG) biosynthesis. In terms of biological role, involved in the biosynthesis of osmoregulated periplasmic glucans (OPGs). In Pectobacterium carotovorum subsp. carotovorum (strain PC1), this protein is Glucans biosynthesis glucosyltransferase H.